We begin with the raw amino-acid sequence, 140 residues long: Acyl carrier protein 1, chloroplastic (140 aa).

The transit peptide at 1–56 directs the protein to the chloroplast; the sequence is MASAAAGASICIKSASFSPLAPGRISSLRSVSLPVSRKSFPSLKSSKSSFALRVSC. Positions 60-135 constitute a Carrier domain; sequence PETVAKVCGI…DAADLIEKLM (76 aa). Ser-95 is subject to O-(pantetheine 4'-phosphoryl)serine.

This sequence belongs to the acyl carrier protein (ACP) family. 4'-phosphopantetheine is transferred from CoA to a specific serine of apo-ACP by acpS. This modification is essential for activity because fatty acids are bound in thioester linkage to the sulfhydryl of the prosthetic group.

Its subcellular location is the plastid. The protein localises to the chloroplast. It functions in the pathway lipid metabolism; fatty acid biosynthesis. In terms of biological role, carrier of the growing fatty acid chain in fatty acid biosynthesis. In Cuphea lanceolata (Cigar flower), this protein is Acyl carrier protein 1, chloroplastic (ACL1.1).